A 281-amino-acid chain; its full sequence is Short neuropeptide F (281 aa).

The first 30 residues, 1 to 30 (MFHLKRELSQGCALALICLVSLQMQQPAQA), serve as a signal peptide directing secretion. Positions 31-64 (EVSSAQGTPLSNLYDNLLQREYAGPVVFPNHQVE) are excised as a propeptide. Phenylalanine amide occurs at positions 77 and 111. Positions 115–165 (DPSLPQMRRTAYDDLLERELTLNSQQQQQQLGTEPDSDLGADYDGLYERVV) are excised as a propeptide. Residues 137–156 (NSQQQQQQLGTEPDSDLGAD) form a disordered region. Position 173 is a tryptophan amide (tryptophan 173). A propeptide spanning residues 176 to 246 (SVPQFEANNA…NDTSEFQREV (71 aa)) is cleaved from the precursor. Residues 226 to 281 (ANDEDTDTDLNNDTSEFQREVRKPMRLRWGRSTGKAPSEQKHTPEETSSIPPKTQN) form a disordered region. Tryptophan 254 carries the post-translational modification Tryptophan amide. A propeptide spanning residues 257–281 (STGKAPSEQKHTPEETSSIPPKTQN) is cleaved from the precursor. Polar residues predominate over residues 271–281 (ETSSIPPKTQN).

This sequence belongs to the NPY family. In terms of tissue distribution, stage 17 embryos show expression in the two brain hemispheres (neural cells located in the dorsal posterior region), the connected ventral ganglion (pairs of neural cells along the ventral midline) and the peripheral nervous system (expressed in the antennal-maxillary sensory cells). In the brain hemispheres of the feeding third instar larva, expression in neural cells is located in the dorsal-anterior region of the protocerebrum. In the larval ventral ganglion, expression is seen in the neural cells located in the subesophagial region, along the ventral midline and in thoracic and abdominal segments. In the adult brain, expression is seen in the medulla and the mushroom body calyx (at protein level).

The protein localises to the secreted. Its function is as follows. Plays a role in controlling food intake and regulating body size. The chain is Short neuropeptide F (sNPF) from Drosophila melanogaster (Fruit fly).